The primary structure comprises 214 residues: Probable nicotinate-nucleotide adenylyltransferase (214 aa).

This sequence belongs to the NadD family.

The enzyme catalyses nicotinate beta-D-ribonucleotide + ATP + H(+) = deamido-NAD(+) + diphosphate. It participates in cofactor biosynthesis; NAD(+) biosynthesis; deamido-NAD(+) from nicotinate D-ribonucleotide: step 1/1. Catalyzes the reversible adenylation of nicotinate mononucleotide (NaMN) to nicotinic acid adenine dinucleotide (NaAD). The protein is Probable nicotinate-nucleotide adenylyltransferase of Rhodopirellula baltica (strain DSM 10527 / NCIMB 13988 / SH1).